The chain runs to 464 residues: Chitotriosidase-1 (464 aa).

An N-terminal signal peptide occupies residues 1-21 (MVQSLAWAGVMTLLMVQWGSA). In terms of domain architecture, GH18 spans 22–386 (AKLVCYLTNW…RTLRQELNLP (365 aa)). A disulfide bridge links C26 with C51. Residues 70–71 (EH) and 97–100 (GGWT) contribute to the chitin site. The Proton donor role is filled by E140. Position 210–213 (210–213 (MAYD)) interacts with chitin. C307 and C368 form a disulfide bridge. The interval 385 to 416 (LPSETPRSPEQIIPEPRPSSMPEQGPSPGLDN) is disordered. A Chitin-binding type-2 domain is found at 415–464 (DNFCQGKADGVYPNPGDESTYYNCGGGRLFQQSCPPGLVFRASCKCCTWS). C448 and C461 form a disulfide bridge.

The protein belongs to the glycosyl hydrolase 18 family. Chitinase class II subfamily. In terms of assembly, monomer. As to expression, highly expressed in tongue, stomach, kidney, brain, skin, testis, and bone marrow. Low level of expression was found in lung, heart, spleen, small intestine, and liver. Not detectable in pancreas, salivary gland, large intestine, uterus, or peripheral blood mononuclear cells (PBMC).

The protein localises to the secreted. Its subcellular location is the lysosome. The enzyme catalyses Random endo-hydrolysis of N-acetyl-beta-D-glucosaminide (1-&gt;4)-beta-linkages in chitin and chitodextrins.. Degrades chitin, chitotriose and chitobiose. May participate in the defense against nematodes and other pathogens. The chain is Chitotriosidase-1 (Chit1) from Mus musculus (Mouse).